The primary structure comprises 334 residues: Protein-methionine-sulfoxide reductase catalytic subunit MsrP (334 aa).

The segment at residues 1–44 (MKKIRKLTEADVTAESAFFMQRRQVLKALGISAAALSLPNAAHA) is a signal peptide (tat-type signal). Mo-molybdopterin contacts are provided by residues asparagine 88, 91-92 (YE), cysteine 146, threonine 181, asparagine 233, arginine 238, and 249-251 (GIK).

This sequence belongs to the MsrP family. In terms of assembly, heterodimer of a catalytic subunit (MsrP) and a heme-binding subunit (MsrQ). Mo-molybdopterin serves as cofactor. Predicted to be exported by the Tat system. The position of the signal peptide cleavage has not been experimentally proven.

It localises to the periplasm. It carries out the reaction L-methionyl-[protein] + a quinone + H2O = L-methionyl-(S)-S-oxide-[protein] + a quinol. It catalyses the reaction L-methionyl-[protein] + a quinone + H2O = L-methionyl-(R)-S-oxide-[protein] + a quinol. Functionally, part of the MsrPQ system that repairs oxidized periplasmic proteins containing methionine sulfoxide residues (Met-O), using respiratory chain electrons. Thus protects these proteins from oxidative-stress damage caused by reactive species of oxygen and chlorine generated by the host defense mechanisms. MsrPQ is essential for the maintenance of envelope integrity under bleach stress, rescuing a wide series of structurally unrelated periplasmic proteins from methionine oxidation, including the primary periplasmic chaperone SurA and the lipoprotein Pal. The catalytic subunit MsrP is non-stereospecific, being able to reduce both (R-) and (S-) diastereoisomers of methionine sulfoxide. In Escherichia fergusonii (strain ATCC 35469 / DSM 13698 / CCUG 18766 / IAM 14443 / JCM 21226 / LMG 7866 / NBRC 102419 / NCTC 12128 / CDC 0568-73), this protein is Protein-methionine-sulfoxide reductase catalytic subunit MsrP.